The primary structure comprises 366 residues: Phenylalanine--tRNA ligase alpha subunit (366 aa).

Glu-259 is a binding site for Mg(2+).

It belongs to the class-II aminoacyl-tRNA synthetase family. Phe-tRNA synthetase alpha subunit type 1 subfamily. In terms of assembly, tetramer of two alpha and two beta subunits. Mg(2+) serves as cofactor.

It is found in the cytoplasm. The enzyme catalyses tRNA(Phe) + L-phenylalanine + ATP = L-phenylalanyl-tRNA(Phe) + AMP + diphosphate + H(+). The chain is Phenylalanine--tRNA ligase alpha subunit from Erythrobacter litoralis (strain HTCC2594).